The following is a 164-amino-acid chain: Peptidyl-prolyl cis-trans isomerase A-like 4A (164 aa).

In terms of domain architecture, PPIase cyclophilin-type spans 7–163 (FFDITVDGKP…KKITIADCGQ (157 aa)).

It belongs to the cyclophilin-type PPIase family. PPIase A subfamily. In terms of tissue distribution, highly expressed in brain, ovary and mammary gland. Moderately expressed in lung, salivary gland, kidney, skin, adipose tissue, intestine and spleen. Weakly expressed in skeletal muscle, liver and stomach. Expressed in pleiomorphic and undifferentiated liposarcomas, osteosarcomas and breast carcinomas.

Its subcellular location is the cytoplasm. The enzyme catalyses [protein]-peptidylproline (omega=180) = [protein]-peptidylproline (omega=0). PPIases accelerate the folding of proteins. It catalyzes the cis-trans isomerization of proline imidic peptide bonds in oligopeptides. The protein is Peptidyl-prolyl cis-trans isomerase A-like 4A of Homo sapiens (Human).